We begin with the raw amino-acid sequence, 554 residues long: CTP synthase (554 aa).

The segment at 1–279 is amidoligase domain; the sequence is MTSSRKVRPT…DTFIIRRLGL (279 aa). Residue Ser-21 coordinates CTP. Ser-21 provides a ligand contact to UTP. Residues 22 to 27 and Asp-79 contribute to the ATP site; that span reads SLGKGL. Residues Asp-79 and Glu-153 each coordinate Mg(2+). CTP contacts are provided by residues 160–162, 200–205, and Lys-236; these read DIE and KTKPTQ. Residues 200–205 and Lys-236 contribute to the UTP site; that span reads KTKPTQ. One can recognise a Glutamine amidotransferase type-1 domain in the interval 304 to 553; it reads TVGIVGKYID…VKTALELRVH (250 aa). Gly-367 contributes to the L-glutamine binding site. Catalysis depends on Cys-394, which acts as the Nucleophile; for glutamine hydrolysis. L-glutamine is bound by residues 395-398, Glu-417, and Arg-478; that span reads LGLQ. Catalysis depends on residues His-526 and Glu-528.

This sequence belongs to the CTP synthase family. As to quaternary structure, homotetramer.

It carries out the reaction UTP + L-glutamine + ATP + H2O = CTP + L-glutamate + ADP + phosphate + 2 H(+). The enzyme catalyses L-glutamine + H2O = L-glutamate + NH4(+). It catalyses the reaction UTP + NH4(+) + ATP = CTP + ADP + phosphate + 2 H(+). The protein operates within pyrimidine metabolism; CTP biosynthesis via de novo pathway; CTP from UDP: step 2/2. Its activity is regulated as follows. Allosterically activated by GTP, when glutamine is the substrate; GTP has no effect on the reaction when ammonia is the substrate. The allosteric effector GTP functions by stabilizing the protein conformation that binds the tetrahedral intermediate(s) formed during glutamine hydrolysis. Inhibited by the product CTP, via allosteric rather than competitive inhibition. Functionally, catalyzes the ATP-dependent amination of UTP to CTP with either L-glutamine or ammonia as the source of nitrogen. Regulates intracellular CTP levels through interactions with the four ribonucleotide triphosphates. The polypeptide is CTP synthase (Corynebacterium glutamicum (strain R)).